We begin with the raw amino-acid sequence, 195 residues long: MARCKS-related protein (195 aa).

Residues 1–195 (MGSQSSKAPR…PTPASAEQNE (195 aa)) are disordered. Glycine 2 carries N-myristoyl glycine lipidation. Threonine 14 carries the phosphothreonine modification. Positions 16–26 (EEAAGASPAKA) are enriched in low complexity. A phosphoserine mark is found at serine 22, serine 36, serine 41, and serine 48. The segment covering 53-64 (GTDEAAGATGDA) has biased composition (low complexity). Serine 71 bears the Phosphoserine mark. The span at 76–85 (AKGEVPPKET) shows a compositional bias: basic and acidic residues. A Phosphothreonine modification is found at threonine 85. The span at 86-98 (PKKKKKFSFKKPF) shows a compositional bias: basic residues. An effector domain involved in lipid-binding and calmodulin-binding region spans residues 87-110 (KKKKKFSFKKPFKLSGLSFKRNRK). Phosphoserine occurs at positions 93, 101, 104, 119, 120, and 135. Position 148 is a phosphothreonine (threonine 148). Phosphoserine is present on residues serine 151, serine 162, and serine 165. Positions 153 to 195 (EPQAKGAEASAASEEEAGPQATEPSTPSGPESGPTPASAEQNE) are enriched in low complexity. 2 positions are modified to phosphothreonine: threonine 178 and threonine 187.

This sequence belongs to the MARCKS family. As to quaternary structure, binds to filamentous actin (F-actin), but not to monomeric G-actin, independently of its phosphorylation status. Post-translationally, phosphorylated. Phosphorylation at Ser-120 and Thr-178 is non-redundantly catalyzed by MAPK8 in vivo. Phosphorylation at Thr-148 is preferentially catalyzed by MAPK8 in vivo, but this modification can also be catalyzed by other kinases in the absence of MAPK8. May be phosphorylated by protein kinase C, which disrupts the interaction with calmodulin.

It is found in the cytoplasm. The protein localises to the cytoskeleton. Its subcellular location is the cell membrane. Controls cell movement by regulating actin cytoskeleton homeostasis and filopodium and lamellipodium formation. When unphosphorylated, induces cell migration. When phosphorylated by MAPK8, induces actin bundles formation and stabilization, thereby reducing actin plasticity, hence restricting cell movement, including neuronal migration. May be involved in coupling the protein kinase C and calmodulin signal transduction systems. The sequence is that of MARCKS-related protein (MARCKSL1) from Homo sapiens (Human).